Consider the following 99-residue polypeptide: Plastocyanin (99 aa).

Positions 1 to 99 constitute a Plastocyanin-like domain; that stretch reads IEILLGGDDG…AGMVGKVTVN (99 aa). The Cu cation site is built by His37, Cys84, His87, and Met92.

It belongs to the plastocyanin family. Cu(2+) serves as cofactor.

Its subcellular location is the plastid. It localises to the chloroplast thylakoid membrane. In terms of biological role, participates in electron transfer between P700 and the cytochrome b6-f complex in photosystem I. This chain is Plastocyanin (PETE), found in Cucumis sativus (Cucumber).